The following is a 246-amino-acid chain: Probable transcriptional regulatory protein ASA_2843 (246 aa).

This sequence belongs to the TACO1 family.

The protein localises to the cytoplasm. This chain is Probable transcriptional regulatory protein ASA_2843, found in Aeromonas salmonicida (strain A449).